The sequence spans 159 residues: 2-C-methyl-D-erythritol 2,4-cyclodiphosphate synthase (159 aa).

The a divalent metal cation site is built by Asp-10 and His-12. 4-CDP-2-C-methyl-D-erythritol 2-phosphate-binding positions include 10-12 (DVH) and 36-37 (HS). His-44 is an a divalent metal cation binding site. Residues 58-60 (DIG), 63-67 (FPDTD), 102-108 (AQAPKMA), 134-137 (TTTE), Phe-141, 141-144 (FTGR), and Arg-144 each bind 4-CDP-2-C-methyl-D-erythritol 2-phosphate.

The protein belongs to the IspF family. In terms of assembly, homotrimer. Requires a divalent metal cation as cofactor.

The enzyme catalyses 4-CDP-2-C-methyl-D-erythritol 2-phosphate = 2-C-methyl-D-erythritol 2,4-cyclic diphosphate + CMP. Its pathway is isoprenoid biosynthesis; isopentenyl diphosphate biosynthesis via DXP pathway; isopentenyl diphosphate from 1-deoxy-D-xylulose 5-phosphate: step 4/6. Its function is as follows. Involved in the biosynthesis of isopentenyl diphosphate (IPP) and dimethylallyl diphosphate (DMAPP), two major building blocks of isoprenoid compounds. Catalyzes the conversion of 4-diphosphocytidyl-2-C-methyl-D-erythritol 2-phosphate (CDP-ME2P) to 2-C-methyl-D-erythritol 2,4-cyclodiphosphate (ME-CPP) with a corresponding release of cytidine 5-monophosphate (CMP). The polypeptide is 2-C-methyl-D-erythritol 2,4-cyclodiphosphate synthase (Shewanella oneidensis (strain ATCC 700550 / JCM 31522 / CIP 106686 / LMG 19005 / NCIMB 14063 / MR-1)).